We begin with the raw amino-acid sequence, 439 residues long: MDSREIHHQQQQQQQQQQQQQQQQQHLQQQQQPPPGMLMSHHNSYNRNPNAAAAVLMGHNTSTSQAMHQRLPFGGSMSPHQPQQHQYHHPQPQQQIDQKTLESLGFDGSPSSVAATQQHSMRFGIDHQQVKKKRGRPRKYAADGGGGGGGGSNIALGLAPTSPLPSASNSYGGGNEGGGGGDSAGANANSSDPPAKRNRGRPPGSGKKQLDALGGTGGVGFTPHVIEVKTGEDIATKILAFTNQGPRAICILSATGAVTNVMLRQANNSNPTGTVKYEGRFEIISLSGSFLNSESNGTVTKTGNLSVSLAGHEGRIVGGCVDGMLVAGSQVQVIVGSFVPDGRKQKQSAGRAQNTPEPASAPANMLSFGGVGGPGSPRSQGQQHSSESSEENESNSPLHRRSNNNNSNNHGIFGNSTPQPLHQIPMQMYQNLWPGNSPQ.

3 disordered regions span residues 1–46, 69–216, and 342–439; these read MDSR…NSYN, QRLP…LGGT, and GRKQ…NSPQ. Low complexity-rich tracts occupy residues 9–31 and 79–95; these read QQQQQQQQQQQQQQQQQHLQQQQ and PHQPQQHQYHHPQPQQQ. Positions 109 to 120 are enriched in polar residues; the sequence is SPSSVAATQQHS. The segment covering 130 to 139 has biased composition (basic residues); that stretch reads VKKKRGRPRK. Residues 131–139 carry the Bipartite nuclear localization signal motif; the sequence is KKKRGRPRK. The segment at residues 131–143 is a DNA-binding region (a.T hook 1); it reads KKKRGRPRKYAAD. 2 stretches are compositionally biased toward gly residues: residues 143–152 and 171–183; these read DGGGGGGGGS and YGGGNEGGGGGDS. The segment at residues 196–208 is a DNA-binding region (a.T hook 2); it reads KRNRGRPPGSGKK. Residues 217–359 enclose the PPC domain; sequence GGVGFTPHVI…GRAQNTPEPA (143 aa). Positions 347-357 are enriched in polar residues; the sequence is QSAGRAQNTPE. Low complexity-rich tracts occupy residues 376–386 and 403–416; these read SPRSQGQQHSS and NNNNSNNHGIFGNS. Residues 428–439 show a composition bias toward polar residues; it reads MYQNLWPGNSPQ.

The protein localises to the nucleus. Its function is as follows. Transcription factor that specifically binds AT-rich DNA sequences related to the nuclear matrix attachment regions (MARs). This is AT-hook motif nuclear-localized protein 13 from Arabidopsis thaliana (Mouse-ear cress).